Here is a 34-residue protein sequence, read N- to C-terminus: Photosystem II reaction center protein M (34 aa).

The chain crosses the membrane as a helical span at residues 5–25; it reads ILAFIATALFILIPTAFLLIL.

This sequence belongs to the PsbM family. In terms of assembly, PSII is composed of 1 copy each of membrane proteins PsbA, PsbB, PsbC, PsbD, PsbE, PsbF, PsbH, PsbI, PsbJ, PsbK, PsbL, PsbM, PsbT, PsbX, PsbY, PsbZ, Psb30/Ycf12, at least 3 peripheral proteins of the oxygen-evolving complex and a large number of cofactors. It forms dimeric complexes.

Its subcellular location is the plastid. The protein localises to the chloroplast thylakoid membrane. Functionally, one of the components of the core complex of photosystem II (PSII). PSII is a light-driven water:plastoquinone oxidoreductase that uses light energy to abstract electrons from H(2)O, generating O(2) and a proton gradient subsequently used for ATP formation. It consists of a core antenna complex that captures photons, and an electron transfer chain that converts photonic excitation into a charge separation. This subunit is found at the monomer-monomer interface. In Anthoceros angustus (Hornwort), this protein is Photosystem II reaction center protein M.